Here is a 733-residue protein sequence, read N- to C-terminus: Probable Rho-GTPase-activating protein 6 (733 aa).

Positions 116-125 are enriched in polar residues; the sequence is VFNESKSSSP. A disordered region spans residues 116–135; the sequence is VFNESKSSSPPDAHTDKYFT. Threonine 141 bears the Phosphothreonine mark. Residues 174 to 256 are disordered; sequence RFDKPSNNGP…SKGSWSSILR (83 aa). Positions 179-195 are enriched in low complexity; the sequence is SNNGPLGRSSLNLSSLS. Composition is skewed to polar residues over residues 196–218 and 225–240; these read HELQ…SSDT and PPSS…ASQD. The 235-residue stretch at 312 to 546 folds into the Rho-GAP domain; the sequence is TNLCKFTFPT…GLIIHWPEVL (235 aa). The segment at 692–713 is disordered; that stretch reads PVTVTASSETNKKSQKINKKAS. Basic residues predominate over residues 704-713; that stretch reads KSQKINKKAS.

The sequence is that of Probable Rho-GTPase-activating protein 6 (rga6) from Schizosaccharomyces pombe (strain 972 / ATCC 24843) (Fission yeast).